The chain runs to 63 residues: Bowman-Birk type proteinase inhibitor B-II (63 aa).

Cystine bridges form between Cys-5-Cys-62, Cys-6-Cys-23, Cys-9-Cys-57, Cys-11-Cys-21, Cys-30-Cys-37, Cys-34-Cys-49, and Cys-39-Cys-47.

Belongs to the Bowman-Birk serine protease inhibitor family.

The chain is Bowman-Birk type proteinase inhibitor B-II from Arachis hypogaea (Peanut).